A 590-amino-acid chain; its full sequence is Beta-fructofuranosidase, cell wall isozyme (590 aa).

An N-terminal signal peptide occupies residues 1–28 (MGTRPRGVVLAPWAVVLVLVLALRLAGA). The active site involves D68. N-linked (GlcNAc...) asparagine glycosylation is found at N190 and N341.

It belongs to the glycosyl hydrolase 32 family.

It localises to the secreted. The protein resides in the cell wall. It catalyses the reaction Hydrolysis of terminal non-reducing beta-D-fructofuranoside residues in beta-D-fructofuranosides.. This Zea mays (Maize) protein is Beta-fructofuranosidase, cell wall isozyme.